We begin with the raw amino-acid sequence, 344 residues long: Probable dual-specificity RNA methyltransferase RlmN (344 aa).

Residue Glu-83 is the Proton acceptor of the active site. A Radical SAM core domain is found at 89–323 (YLDRKTICVS…VSVRRSRGKD (235 aa)). Cys-96 and Cys-328 are joined by a disulfide. The [4Fe-4S] cluster site is built by Cys-103, Cys-107, and Cys-110. S-adenosyl-L-methionine contacts are provided by residues 153–154 (GE), Ser-185, 209–211 (SLH), and Asn-285. Residue Cys-328 is the S-methylcysteine intermediate of the active site.

It belongs to the radical SAM superfamily. RlmN family. Requires [4Fe-4S] cluster as cofactor.

The protein localises to the cytoplasm. The enzyme catalyses adenosine(2503) in 23S rRNA + 2 reduced [2Fe-2S]-[ferredoxin] + 2 S-adenosyl-L-methionine = 2-methyladenosine(2503) in 23S rRNA + 5'-deoxyadenosine + L-methionine + 2 oxidized [2Fe-2S]-[ferredoxin] + S-adenosyl-L-homocysteine. It catalyses the reaction adenosine(37) in tRNA + 2 reduced [2Fe-2S]-[ferredoxin] + 2 S-adenosyl-L-methionine = 2-methyladenosine(37) in tRNA + 5'-deoxyadenosine + L-methionine + 2 oxidized [2Fe-2S]-[ferredoxin] + S-adenosyl-L-homocysteine. Its function is as follows. Specifically methylates position 2 of adenine 2503 in 23S rRNA and position 2 of adenine 37 in tRNAs. In Deinococcus geothermalis (strain DSM 11300 / CIP 105573 / AG-3a), this protein is Probable dual-specificity RNA methyltransferase RlmN.